The following is a 267-amino-acid chain: Putative B3 domain-containing protein LOC_Os07g12820 (267 aa).

A DNA-binding region (TF-B3) is located at residues 4 to 99 (PTFSMVKIKT…RLNVIIFNKE (96 aa)).

It localises to the nucleus. This chain is Putative B3 domain-containing protein LOC_Os07g12820, found in Oryza sativa subsp. japonica (Rice).